Here is a 258-residue protein sequence, read N- to C-terminus: Snake venom serine protease KN12 (258 aa).

Residues 1–18 (MVLIRVLANLLILQLSYA) form the signal peptide. A propeptide spanning residues 19–24 (QRSSEL) is cleaved from the precursor. The Peptidase S1 domain occupies 25 to 249 (VIGGDECNIN…HLDWIQNIIA (225 aa)). 6 cysteine pairs are disulfide-bonded: cysteine 31–cysteine 163, cysteine 50–cysteine 66, cysteine 98–cysteine 256, cysteine 142–cysteine 210, cysteine 174–cysteine 189, and cysteine 200–cysteine 225. Histidine 65 (charge relay system) is an active-site residue. The N-linked (GlcNAc...) asparagine glycan is linked to asparagine 103. Catalysis depends on aspartate 110, which acts as the Charge relay system. N-linked (GlcNAc...) asparagine glycosylation is found at asparagine 121, asparagine 122, asparagine 154, and asparagine 170. Serine 204 functions as the Charge relay system in the catalytic mechanism. A glycan (N-linked (GlcNAc...) asparagine) is linked at asparagine 251.

This sequence belongs to the peptidase S1 family. Snake venom subfamily. Monomer. Expressed by the venom gland.

It is found in the secreted. Snake venom serine protease that may act in the hemostasis system of the prey. In Trimeresurus stejnegeri (Chinese green tree viper), this protein is Snake venom serine protease KN12.